Consider the following 599-residue polypeptide: MSLLKIYWRAMQYLAVERTATITMCVASVLVALVTLAEPVLFGRVIQSISDKGDIFSPLLMWAALGGFNIMAAVFVARGADRLAHRRRLGVMIDSYERLITMPLAWHQKRGTSNALHTLIRATDSLFTLWLEFMRQHLTTVVALATLIPVAMTMDMRMSLVLIVLGVIYVMIGQLVMRKTKDGQAAVEKHHHKLFEHVSDTISNVSVVQSYNRIASETQALRDYAKNLENAQFPVLNWWALASGLNRMASTFSMVVVLVLGAYFVTKGQMRVGDVIAFIGFAQLMIGRLDQISAFINQTVTARAKLEEFFQMEDATADRQEPENVADLNDVKGDIVFDNVTYEFPNSGQGVYDVSFEVKPGQTVAIVGPTGAGKTTLINLLQRVFDPAAGRIMIDGTDTRTVSRRSLRHAIATVFQDAGLFNRSVEDNIRVGRANATHEEVHAAAKAAAAHDFILAKSEGYDTFVGERGSQLSGGERQRLAIARAILKDSPILVLDEATSALDVETEEKLKQAVDELSHNRTTFIIAHRLSTVRSADLVLFMDKGHLVESGSFNELAERGGRFSDLLRAGGLKLEDKQPKQPVVEGSNVMPFPVKGAVA.

One can recognise an ABC transmembrane type-1 domain in the interval 21 to 301 (TITMCVASVL…ISAFINQTVT (281 aa)). Helical transmembrane passes span 22-42 (ITMCVASVLVALVTLAEPVLF), 55-75 (IFSPLLMWAALGGFNIMAAVF), 156-176 (MRMSLVLIVLGVIYVMIGQLV), 248-268 (MASTFSMVVVLVLGAYFVTKG), and 276-296 (IAFIGFAQLMIGRLDQISAFI). The ABC transporter domain maps to 335–569 (IVFDNVTYEF…GGRFSDLLRA (235 aa)). 368–375 (GPTGAGKT) contributes to the ATP binding site.

The protein belongs to the ABC transporter superfamily. Beta-(1--&gt;2)glucan exporter (TC 3.A.1.108.1) family. In terms of assembly, homodimer.

Its subcellular location is the cell inner membrane. It catalyses the reaction [(1-&gt;2)-beta-D-glucosyl](n)(in) + ATP + H2O = [(1-&gt;2)-beta-D-glucosyl](n)(out) + ADP + phosphate + H(+). Functionally, involved in beta-(1--&gt;2)glucan export. Transmembrane domains (TMD) form a pore in the inner membrane and the ATP-binding domain (NBD) is responsible for energy generation. In Brucella melitensis biotype 1 (strain ATCC 23456 / CCUG 17765 / NCTC 10094 / 16M), this protein is Beta-(1--&gt;2)glucan export ATP-binding/permease protein NdvA.